Reading from the N-terminus, the 585-residue chain is ATP-dependent RNA helicase DBP3 (585 aa).

The disordered stretch occupies residues 1 to 124 (MTTSATEKAL…SSSASAASFT (124 aa)). The segment covering 26-43 (AKAAAAAGASASTSLEGS) has biased composition (low complexity). Basic residues-rich tracts occupy residues 52-64 (KDKK…KDKK) and 79-93 (AKKR…KKAA). Over residues 94–124 (AKSGAATSLESTPAASPAPAASSSASAASFT) the composition is skewed to low complexity. Residues 159–187 (FRELDGKVDAAVKKTLDSQGFSTPTPIQA) carry the Q motif motif. Residues 190–377 (WPVLLQNKDV…ESFMNGPVRV (188 aa)) enclose the Helicase ATP-binding domain. 203–210 (AETGSGKT) serves as a coordination point for ATP. Residues 322-325 (DEAD) carry the DEAD box motif. Residues 406–554 (RLNDFLRSVN…KVPDALTKFP (149 aa)) form the Helicase C-terminal domain.

The protein belongs to the DEAD box helicase family. DDX5/DBP2 subfamily.

It is found in the nucleus. It localises to the nucleolus. It carries out the reaction ATP + H2O = ADP + phosphate + H(+). Its function is as follows. ATP-dependent RNA helicase required for 60S ribosomal subunit synthesis. Involved in efficient pre-rRNA processing, predominantly at site A3, which is necessary for the normal formation of 25S and 5.8S rRNAs. This is ATP-dependent RNA helicase DBP3 (DBP3) from Mycosarcoma maydis (Corn smut fungus).